A 663-amino-acid polypeptide reads, in one-letter code: Transmembrane 9 superfamily member 2 (663 aa).

The signal sequence occupies residues 1–28 (MSARLPVLSPPRWPRLLLLSLLLLGAVP). The Lumenal segment spans residues 29-300 (GPRRSGGFYL…LESMPHTHIQ (272 aa)). A helical transmembrane segment spans residues 301–321 (WFSIMNSLVIVLFLSGMVAMI). The Cytoplasmic portion of the chain corresponds to 322-374 (MLRTLHKDIARYNQMDSTEDAQEEFGWKLVHGDIFRPPRKGMLLSVFLGSGTQ). A helical membrane pass occupies residues 375–395 (ILIMTFVTLFFACLGFLSPAN). At 396 to 398 (RGA) the chain is on the lumenal side. A helical membrane pass occupies residues 399-419 (LMTCAVVLWVLLGTPAGYVAA). Topologically, residues 420–437 (RFYKSFGGEKWKTNVLLT) are cytoplasmic. The helical transmembrane segment at 438-458 (SFLCPGIVFADFFIMNLILWG) threads the bilayer. Residues 459 to 466 (EGSSAAIP) lie on the Lumenal side of the membrane. Residues 467 to 487 (FGTLVAILALWFCISVPLTFI) form a helical membrane-spanning segment. The Cytoplasmic segment spans residues 488–522 (GAYFGFKKNAIEHPVRTNQIPRQIPEQSFYTKPLP). The chain crosses the membrane as a helical span at residues 523–543 (GIIMGGILPFGCIFIQLFFIL). Residues 544–554 (NSIWSHQMYYM) lie on the Lumenal side of the membrane. Residues 555–575 (FGFLFLVFIILVITCSEATIL) form a helical membrane-spanning segment. Topologically, residues 576–591 (LCYFHLCAEDYHWQWR) are cytoplasmic. The chain crosses the membrane as a helical span at residues 592-612 (SFLTSGFTAVYFLIYAVHYFF). Residues 613-631 (SKLQITGTASTILYFGYTM) lie on the Lumenal side of the membrane. The helical transmembrane segment at 632–652 (IMVLIFFLFTGTIGFFACFWF) threads the bilayer. At 653-663 (VTKIYSVVKVD) the chain is on the cytoplasmic side.

Belongs to the nonaspanin (TM9SF) (TC 9.A.2) family.

Its subcellular location is the endosome membrane. The protein resides in the golgi outpost. It localises to the cytoplasm. The protein localises to the cytoskeleton. It is found in the microtubule organizing center. Functionally, in the intracellular compartments, may function as a channel or small molecule transporter. This is Transmembrane 9 superfamily member 2 (TM9SF2) from Pongo abelii (Sumatran orangutan).